A 545-amino-acid polypeptide reads, in one-letter code: Serine/threonine-protein kinase PAK 1 (545 aa).

Residues 1 to 75 (MSNNGVDIQD…KKREKERPEI (75 aa)) are disordered. N-acetylserine is present on Ser2. Position 21 is a phosphoserine; by PKB and autocatalysis (Ser21). Ser57 carries the post-translational modification Phosphoserine; by autocatalysis. Positions 70 to 140 (KERPEISLPS…YNSKKTSNSK (71 aa)) are autoregulatory region. A CRIB domain is found at 75–88 (ISLPSDFEHTIHVG). Residues 75 to 105 (ISLPSDFEHTIHVGFDAVTGEFTGMPEQWAR) are GTPase-binding. Position 84 is a phosphothreonine; by OXSR1 (Thr84). Ser115 bears the Phosphoserine mark. Residues Tyr131 and Tyr142 each carry the phosphotyrosine modification. A phosphoserine; by autocatalysis mark is found at Ser144 and Ser149. The tract at residues 150–198 (AEDYNSSNTLNVKTVSETPAVPPVSEDDEDDDDDATPPPVIAPRPEHTK) is disordered. Positions 152-166 (DYNSSNTLNVKTVSE) are enriched in polar residues. A Phosphotyrosine; by JAK2 modification is found at Tyr153. Ser174 is modified (phosphoserine). A compositionally biased stretch (acidic residues) spans 174-184 (SEDDEDDDDDA). At Thr185 the chain carries Phosphothreonine. The residue at position 199 (Ser199) is a Phosphoserine; by autocatalysis. Tyr201 carries the phosphotyrosine; by JAK2 modification. At Ser204 the chain carries Phosphoserine; by autocatalysis. The tract at residues 210–250 (PVTPTRDVATSPISPTENNTTPPDALTRNTEKQKKKPKMSD) is disordered. A phosphothreonine mark is found at Thr212 and Thr219. 2 positions are modified to phosphoserine: Ser220 and Ser223. Over residues 220-231 (SPISPTENNTTP) the composition is skewed to polar residues. Thr225, Thr229, and Thr230 each carry phosphothreonine. Residues 270–521 (YTPFEKIGQG…AKELLQHQFL (252 aa)) form the Protein kinase domain. An ATP-binding site is contributed by 276–284 (IGQGASGTV). Phosphotyrosine; by JAK2 is present on Tyr285. ATP is bound at residue Lys299. The active-site Proton acceptor is the Asp389. Thr423 carries the post-translational modification Phosphothreonine; by autocatalysis, BRSK2 and PDPK1.

It belongs to the protein kinase superfamily. STE Ser/Thr protein kinase family. STE20 subfamily. Homodimer in its autoinhibited state. Active as monomer. Interacts with GIT1. Component of cytoplasmic complexes, which also contains PXN, ARHGEF7 and GIT1. Interacts with NISCH. Interacts with DVL1; mediates the formation of a DVL1, MUSK and PAK1 ternary complex involved in AChR clustering. Binds to the caspase-cleaved p110 isoform of CDC2L1 and CDC2L2, p110C, but not the full-length proteins. Interacts with ARHGEF7. Interacts tightly with GTP-bound but not GDP-bound CDC42/P21 and RAC1. Interacts with SCRIB. Interacts with PDPK1. Interacts (via kinase domain) with RAF1. Interacts with NCK1 and NCK2. Interacts with TBCB. Interacts with BRSK2. Interacts with SNAI1. Interacts with CIB1 (via N-terminal region); the interaction is direct, promotes PAK1 activity and occurs in a calcium-dependent manner. Interacts with INPP5K. Interacts with gamma-tubulin. Interacts with RHOU; the interaction promotes PAK1 activation. The cofactor is Mg(2+). Autophosphorylated in trans, meaning that in a dimer, one kinase molecule phosphorylates the other one. Activated by autophosphorylation at Thr-423 in response to a conformation change, triggered by interaction with GTP-bound CDC42 or RAC1. Activated by phosphorylation at Thr-423 by BRSK2 and by PDPK1. Phosphorylated by JAK2 in response to PRL; this increases PAK1 kinase activity. Phosphorylated at Ser-21 by PKB/AKT; this reduces interaction with NCK1 and association with focal adhesion sites. Upon DNA damage, phosphorylated at Thr-212 and translocates to the nucleoplasm. Phosphorylated at tyrosine residues, which can be enhanced by NTN1.

It is found in the cytoplasm. The protein localises to the cell junction. The protein resides in the focal adhesion. Its subcellular location is the cell projection. It localises to the lamellipodium. It is found in the cell membrane. The protein localises to the ruffle membrane. The protein resides in the invadopodium. Its subcellular location is the nucleus. It localises to the nucleoplasm. It is found in the chromosome. The protein localises to the cytoskeleton. The protein resides in the microtubule organizing center. Its subcellular location is the centrosome. The catalysed reaction is L-seryl-[protein] + ATP = O-phospho-L-seryl-[protein] + ADP + H(+). It catalyses the reaction L-threonyl-[protein] + ATP = O-phospho-L-threonyl-[protein] + ADP + H(+). Phosphorylation of Thr-84 by OXSR1 inhibits activation. Activated by binding small G proteins. Binding of GTP-bound CDC42 or RAC1 to the autoregulatory region releases monomers from the autoinhibited dimer, and enables activation by phosphorylation of Thr-423. Protein kinase involved in intracellular signaling pathways downstream of integrins and receptor-type kinases that plays an important role in cytoskeleton dynamics, in cell adhesion, migration, proliferation, apoptosis, mitosis, and in vesicle-mediated transport processes. Can directly phosphorylate BAD and protects cells against apoptosis. Activated by interaction with CDC42 and RAC1. Functions as a GTPase effector that links the Rho-related GTPases CDC42 and RAC1 to the JNK MAP kinase pathway. Phosphorylates and activates MAP2K1, and thereby mediates activation of downstream MAP kinases. Involved in the reorganization of the actin cytoskeleton, actin stress fibers and of focal adhesion complexes. Phosphorylates the tubulin chaperone TBCB and thereby plays a role in the regulation of microtubule biogenesis and organization of the tubulin cytoskeleton. Plays a role in the regulation of insulin secretion in response to elevated glucose levels. Part of a ternary complex that contains PAK1, DVL1 and MUSK that is important for MUSK-dependent regulation of AChR clustering during the formation of the neuromuscular junction (NMJ). Activity is inhibited in cells undergoing apoptosis, potentially due to binding of CDC2L1 and CDC2L2. Phosphorylates MYL9/MLC2. Phosphorylates RAF1 at 'Ser-338' and 'Ser-339' resulting in: activation of RAF1, stimulation of RAF1 translocation to mitochondria, phosphorylation of BAD by RAF1, and RAF1 binding to BCL2. Phosphorylates SNAI1 at 'Ser-246' promoting its transcriptional repressor activity by increasing its accumulation in the nucleus. In podocytes, promotes NR3C2 nuclear localization. Required for atypical chemokine receptor ACKR2-induced phosphorylation of LIMK1 and cofilin (CFL1) and for the up-regulation of ACKR2 from endosomal compartment to cell membrane, increasing its efficiency in chemokine uptake and degradation. In synapses, seems to mediate the regulation of F-actin cluster formation performed by SHANK3, maybe through CFL1 phosphorylation and inactivation. Plays a role in RUFY3-mediated facilitating gastric cancer cells migration and invasion. In response to DNA damage, phosphorylates MORC2 which activates its ATPase activity and facilitates chromatin remodeling. In neurons, plays a crucial role in regulating GABA(A) receptor synaptic stability and hence GABAergic inhibitory synaptic transmission through its role in F-actin stabilization. In hippocampal neurons, necessary for the formation of dendritic spines and excitatory synapses; this function is dependent on kinase activity and may be exerted by the regulation of actomyosin contractility through the phosphorylation of myosin II regulatory light chain (MLC). Along with GIT1, positively regulates microtubule nucleation during interphase. Phosphorylates FXR1, promoting its localization to stress granules and activity. Phosphorylates ILK on 'Thr-173' and 'Ser-246', promoting nuclear export of ILK. This Mus musculus (Mouse) protein is Serine/threonine-protein kinase PAK 1.